Consider the following 130-residue polypeptide: Cystatin domain-containing protein 1 (130 aa).

Residues 1 to 23 form the signal peptide; it reads MSWKVPMLVGLVVLGTHIWTINK. Residues 37-116 enclose the Cystatin domain; that stretch reads ASVEFAVAQF…CVFQVDARPW (80 aa). Cystine bridges form between C84–C94 and C107–C127.

The protein belongs to the cystatin family.

The protein localises to the secreted. Its function is as follows. May play a specialized role in spermatogenesis. This is Cystatin domain-containing protein 1 from Rattus norvegicus (Rat).